The following is a 319-amino-acid chain: Ribonuclease Z (319 aa).

Positions 62, 64, 66, 67, 145, 215, and 273 each coordinate Zn(2+). Asp66 functions as the Proton acceptor in the catalytic mechanism.

It belongs to the RNase Z family. In terms of assembly, homodimer. Zn(2+) is required as a cofactor.

It catalyses the reaction Endonucleolytic cleavage of RNA, removing extra 3' nucleotides from tRNA precursor, generating 3' termini of tRNAs. A 3'-hydroxy group is left at the tRNA terminus and a 5'-phosphoryl group is left at the trailer molecule.. In terms of biological role, zinc phosphodiesterase, which displays some tRNA 3'-processing endonuclease activity. Probably involved in tRNA maturation, by removing a 3'-trailer from precursor tRNA. The sequence is that of Ribonuclease Z from Borrelia duttonii (strain Ly).